A 170-amino-acid polypeptide reads, in one-letter code: MSDEILNGAAAPADAAAGPAFTIEKIYVKDVSFESPNAPAVFNDANQPELQLNLNQKVQRLNDNAFEVVLAVTLTCTAGGKTAYVAEVQQAGVFGLVGLEPQAIDVLLGTQCPNILFPYVRTLVSDLIQAGGFPPFYLQPINFEALYAETLRQRSQGETSLADSEPAGNA.

Belongs to the SecB family. Homotetramer, a dimer of dimers. One homotetramer interacts with 1 SecA dimer.

It localises to the cytoplasm. One of the proteins required for the normal export of preproteins out of the cell cytoplasm. It is a molecular chaperone that binds to a subset of precursor proteins, maintaining them in a translocation-competent state. It also specifically binds to its receptor SecA. This is Protein-export protein SecB from Xanthomonas campestris pv. campestris (strain 8004).